Reading from the N-terminus, the 96-residue chain is Protein Vpr (96 aa).

The interval 1 to 42 is homooligomerization; sequence MEQAPEDQGPQREPHNEWTLELLEELKNEAVRHFPRIWLHGL. Phosphoserine; by host is present on residues S79, S94, and S96.

It belongs to the HIV-1 VPR protein family. In terms of assembly, homooligomer, may form homodimer. Interacts with p6-gag region of the Pr55 Gag precursor protein through a (Leu-X-X)4 motif near the C-terminus of the P6gag protein. Interacts with host UNG. May interact with host RAD23A/HHR23A. Interacts with host VPRBP/DCAF1, leading to hijack the CUL4A-RBX1-DDB1-DCAF1/VPRBP complex, mediating ubiquitination of host proteins such as TERT and ZGPAT and arrest of the cell cycle in G2 phase. Post-translationally, phosphorylated on several residues by host. These phosphorylations regulate VPR activity for the nuclear import of the HIV-1 pre-integration complex.

The protein resides in the virion. It localises to the host nucleus. It is found in the host extracellular space. In terms of biological role, during virus entry, plays a role in the transport of the viral pre-integration (PIC) complex to the host nucleus. This function is crucial for viral infection of non-dividing macrophages. May act directly at the nuclear pore complex, by binding nucleoporins phenylalanine-glycine (FG)-repeat regions. During virus replication, may deplete host UNG protein, and incude G2-M cell cycle arrest. Acts by targeting specific host proteins for degradation by the 26S proteasome, through association with the cellular CUL4A-DDB1 E3 ligase complex by direct interaction with host VPRPB/DCAF-1. Cell cycle arrest reportedly occurs within hours of infection and is not blocked by antiviral agents, suggesting that it is initiated by the VPR carried into the virion. Additionally, VPR induces apoptosis in a cell cycle dependent manner suggesting that these two effects are mechanistically linked. Detected in the serum and cerebrospinal fluid of AIDS patient, VPR may also induce cell death to bystander cells. In Human immunodeficiency virus type 1 group M subtype B (isolate BRU/LAI) (HIV-1), this protein is Protein Vpr.